The sequence spans 590 residues: Arginine--tRNA ligase (590 aa).

The 'HIGH' region motif lies at 138–148 (ANPTGPLHIGH).

This sequence belongs to the class-I aminoacyl-tRNA synthetase family. As to quaternary structure, monomer.

The protein resides in the cytoplasm. It carries out the reaction tRNA(Arg) + L-arginine + ATP = L-arginyl-tRNA(Arg) + AMP + diphosphate. This chain is Arginine--tRNA ligase, found in Orientia tsutsugamushi (strain Boryong) (Rickettsia tsutsugamushi).